We begin with the raw amino-acid sequence, 956 residues long: MEAGGLPLELWRMILAYLHLPDLGRCSLVCRAWYELILSLDSTRWRQLCLGCTECRHPNWPNQPDVEPESWREAFKQHYLASKTWTKNALDLESSICFSLFRRRRERRTLSVGPGREFDSLGSALAMASLYDRIVLFPGVYEEQGEIILKVPVEIVGQGKLGEVALLASIDQHCSTTRLCNLVFTPAWFSPIMYKTTSGHVQFDNCNFENGHIQVHGPGTCQVKFCTFKNTHIFLHNVPLCVLENCEFVGSENNSVTVEGHPSADKNWAYKYLLGLIKSSPTFLPTEDSDFLMSLDLESRDQAWSPKTCDIVIEGSQSPTSPASSSPKPGSKAGSQEAEVGSDGERVAQTPDSSDGGLSPSGEDEDEDQLMYRLSYQVQGPRPVLGGSFLGPPLPGASIQLPSCLVLNSLQQELQKDKEAMALANSVQGCLIRKCLFRDGKGGVFVCSHGRAKMEGNIFRNLTYAVRCIHNSKIIMLRNDIYRCRASGIFLRLEGGGLIAGNNIYHNAEAGVDIRKKSNPLILCNQIHHGLRSGIVVLGNGKGIIRNNQIFSNKEAGIYILYHGNPVVSGNHIFKGRAAGIAVNENGKGLITENVIRENQWGGVDIRRGGIPVLRSNLICFGYSDGVVVGDEGKGLIEGNTIYANKGCGVWMMSSSLPHVTSNHVSYNGLYGVAVFSQKDGSSELPRGHRAQENFSEDGDAILWETELEKEDDPLRRPITIALVESNSINHNGASGLYVQSSEALHVITNVIHANGDRGITVAQSSQPTRVANNSISCNRQSGVKVEAQCKVELRGNGIYDNRGHGIITKGDSTIVIENDIIGNRGSGLQLLPRSDTKVIKNRIHSFRAYGIAVRGRAKALVQENIIFQGKTSKTIFQQISNNRECIMQNNKFLVFKKKSDTWRLVNPPARPHLENSLRRPSAAHNGQKVTAMATRITARVEGGYHSNRSVFCTIL.

In terms of domain architecture, F-box spans 1 to 48 (MEAGGLPLELWRMILAYLHLPDLGRCSLVCRAWYELILSLDSTRWRQL). PbH1 repeat units lie at residues 198-217 (SGHV…QVHG) and 238-260 (VPLC…TVEG). A disordered region spans residues 314–367 (EGSQSPTSPASSSPKPGSKAGSQEAEVGSDGERVAQTPDSSDGGLSPSGEDEDE). Composition is skewed to low complexity over residues 316 to 336 (SQSP…AGSQ) and 351 to 361 (PDSSDGGLSPS). Residues Ser321 and Ser326 each carry the phosphoserine modification. PbH1 repeat units lie at residues 427–448 (VQGC…FVCS), 449–470 (HGRA…RCIH), 471–493 (NSKI…FLRL), 494–516 (EGGG…DIRK), 538–560 (LGNG…GIYI), 561–583 (LYHG…GIAV), 584–606 (NENG…GVDI), 607–629 (RRGG…GVVV), 630–652 (GDEG…GVWM), 653–675 (MSSS…GVAV), 717–739 (RPIT…GLYV), 740–762 (QSSE…GITV), 764–786 (QSSQ…GVKV), 787–809 (EAQC…GIIT), and 832–854 (LPRS…GIAV).

As to quaternary structure, component of the SCF(FBXO10) complex consisting of CUL1, SKP1 and FBXO10. Interacts with BCL2. Interacts with PRDM1.

It is found in the cytoplasm. It participates in protein modification; protein ubiquitination. Functionally, substrate-recognition component of the SCF (SKP1-CUL1-F-box protein)-type E3 ubiquitin ligase complex. Mediates the ubiquitination and degradation of BCL2, an antiapoptotic protein, thereby playing a role in apoptosis by controlling the stability of BCL2. Targets also the receptor for advanced glycation end products RAGE for ubiquitination and subsequent lysosomal degradation. Directly controls HGAL/GCSAM ubiquitination and degradation and thereby decreases BCR signaling. In Homo sapiens (Human), this protein is F-box only protein 10 (FBXO10).